Reading from the N-terminus, the 315-residue chain is DNA-directed RNA polymerase subunit alpha (315 aa).

An alpha N-terminal domain (alpha-NTD) region spans residues 1–228 (MAQFQIECVE…DLFNPLKDIS (228 aa)). The tract at residues 238–315 (IPDDPTAQIP…LPQERSSKHS (78 aa)) is alpha C-terminal domain (alpha-CTD).

The protein belongs to the RNA polymerase alpha chain family. In terms of assembly, in cyanobacteria the RNAP catalytic core is composed of 2 alpha, 1 beta, 1 beta', 1 gamma and 1 omega subunit. When a sigma factor is associated with the core the holoenzyme is formed, which can initiate transcription.

The enzyme catalyses RNA(n) + a ribonucleoside 5'-triphosphate = RNA(n+1) + diphosphate. In terms of biological role, DNA-dependent RNA polymerase catalyzes the transcription of DNA into RNA using the four ribonucleoside triphosphates as substrates. In Trichormus variabilis (strain ATCC 29413 / PCC 7937) (Anabaena variabilis), this protein is DNA-directed RNA polymerase subunit alpha.